A 429-amino-acid polypeptide reads, in one-letter code: MMAVASSRTPAVTSFIAPLVAMVGGGQLARMTHQAAIALGQNLRVLVTSADDPAAQVTPNVVIGSHTDLAALRRVAAGADVLTFDHEHVPNELLEKLVADGVNVAPSPQALVHAQDKLVMRQRLAAAGVAVPRYAGIKDPDEIDVFAARVDAPIVVKAVRGGYDGRGVRMARDVADARDFARECLADGVAVLVEERVDLRRELSALVARSPFGQGAAWPVVQTVQRDGTCVLVIAPAPALPDDLATAAQRLALQLADELGVVGVLAVELFETTDGALLVNELAMRPHNSGHWTIDGARTSQFEQHLRAVLDYPLGDSDAVVPVTVMANVLGAAQPPAMSVDERLHHLFARMPDARVHLYGKAERPGRKVGHINFLGSDVAQLCERAELAAHWLSHGRWTDGWDPHRASDDAVGVPPACGGRSDEEERRL.

ATP-binding positions include lysine 117, lysine 157, 194 to 197, glutamate 202, and 280 to 281; these read EERV and NE. An ATP-grasp domain is found at 121–310; sequence RQRLAAAGVA…QFEQHLRAVL (190 aa). Residues 406–429 are disordered; the sequence is RASDDAVGVPPACGGRSDEEERRL.

This sequence belongs to the PurK/PurT family. As to quaternary structure, homodimer.

It catalyses the reaction 5-amino-1-(5-phospho-beta-D-ribosyl)imidazole + hydrogencarbonate + ATP = 5-carboxyamino-1-(5-phospho-D-ribosyl)imidazole + ADP + phosphate + 2 H(+). Its pathway is purine metabolism; IMP biosynthesis via de novo pathway; 5-amino-1-(5-phospho-D-ribosyl)imidazole-4-carboxylate from 5-amino-1-(5-phospho-D-ribosyl)imidazole (N5-CAIR route): step 1/2. In terms of biological role, catalyzes the ATP-dependent conversion of 5-aminoimidazole ribonucleotide (AIR) and HCO(3)(-) to N5-carboxyaminoimidazole ribonucleotide (N5-CAIR). This chain is N5-carboxyaminoimidazole ribonucleotide synthase, found in Mycobacterium bovis (strain ATCC BAA-935 / AF2122/97).